The following is a 325-amino-acid chain: MVQEQMKLTGTLEGHTGWVTQIATYTRNDKTTVLSSSRDKTILVWDVDSVAPVDEGPIGRPVRSLTGHNHFVSDVVISSDGQFALSGSWDKTLRLWDLNQGVSTRQFISHTKDVLSVAFSADNRQIVSGSRDKSIKLWNTLAQCKYTITDDCHTDWVSTVRFSPSNRDPVIVSAGWDKVVKVWNLGNCRLKTNHIGHTGYVNTVTVSPDGSLCASGGKDGQAMLWDLNEGKHLYTLPGNDVINAMSFSPNRYWLCAAVGSSIKIWDLEDKKEIEELKPEIASSGSSRGSSPQCISLAWSQDGQTLFAGYTDNIIRVYQVSIRASN.

7 WD repeats span residues Gln5–Asp48, Ile58–Asn99, Gln100–Leu141, Gln143–Gly186, Asn187–Leu227, Asn228–Glu268, and Asp269–Ser320.

This sequence belongs to the WD repeat G protein beta family. Ribosomal protein RACK1 subfamily.

In terms of biological role, required for the expression of antimicrobial peptide nlp-29 in response to fungal infection or physical injury. This Caenorhabditis elegans protein is Small ribosomal subunit protein RACK1 (rack-1).